Reading from the N-terminus, the 380-residue chain is Cytochrome b (380 aa).

Helical transmembrane passes span 34-54, 78-99, 114-134, and 179-199; these read FGSLLALCLVTQILTGLLLAM, WLIRNMHANGASFFFICIYMHI, WNTGVLLLLTLMATAFVGYVL, and FFALHFLLPFMIAGLTLIHLT. The heme b site is built by His-84 and His-98. Heme b contacts are provided by His-183 and His-197. His-202 is an a ubiquinone binding site. Transmembrane regions (helical) follow at residues 227 to 247, 289 to 309, 321 to 341, and 348 to 368; these read LKDILGLALLLLPLTAMALFS, LGGVLALAASVLVLLLCPFLH, LSQSLFWILVANLLILTWIGS, and FIIIGQLASTTYFIILLILFP.

Belongs to the cytochrome b family. As to quaternary structure, the cytochrome bc1 complex contains 11 subunits: 3 respiratory subunits (MT-CYB, CYC1 and UQCRFS1), 2 core proteins (UQCRC1 and UQCRC2) and 6 low-molecular weight proteins (UQCRH/QCR6, UQCRB/QCR7, UQCRQ/QCR8, UQCR10/QCR9, UQCR11/QCR10 and a cleavage product of UQCRFS1). This cytochrome bc1 complex then forms a dimer. Heme b serves as cofactor.

It localises to the mitochondrion inner membrane. In terms of biological role, component of the ubiquinol-cytochrome c reductase complex (complex III or cytochrome b-c1 complex) that is part of the mitochondrial respiratory chain. The b-c1 complex mediates electron transfer from ubiquinol to cytochrome c. Contributes to the generation of a proton gradient across the mitochondrial membrane that is then used for ATP synthesis. The sequence is that of Cytochrome b (MT-CYB) from Oceanodroma tristrami (Tristram's storm-petrel).